A 475-amino-acid chain; its full sequence is MAGRPHPYDSNSSDPENWDRKLHSRPRKLYKHSSSASRVAKGGVDHTKMSLHGASGGHERSRDRRRSSDRSRDSSHERAESQLTPCIRNVTSPTRQHHIEREKDHSSSRPSSPRPQRASPNGSMSSAGNSSRNSSQSSSDGSCKTSGEMVFVYENAKEGARNVRTSERVTLIVDNTRFVVDPSIFTAQPNTMLGRMFGSGREHNFTRPNEKGEYEVAEGIGSTVFRAILDYYKTGIIRCPDGISIPELREACDYLCISFEYSTIKCRDLSALMHELSNDGARRQFEFYLEEMILPLMVASAQSGERECHIVVLTDDDVVDWDEEYPPQMGEEYSQIIYSTKLYRFFKYIENRDVAKSVLKERGLKKIRLGIEGYPTYKEKVKKRPGGRPEVIYNYVQRPFIRMSWEKEEGKSRHVDFQCVKSKSITNLAAAAADIPQDQLVVMHPTPQVDELDILPSHPASGNNDLDPDAQNPML.

Residues 1 to 144 (MAGRPHPYDS…SQSSSDGSCK (144 aa)) form a disordered region. Residues 22–31 (LHSRPRKLYK) are compositionally biased toward basic residues. Over residues 57–80 (GHERSRDRRRSSDRSRDSSHERAE) the composition is skewed to basic and acidic residues. The segment covering 81 to 94 (SQLTPCIRNVTSPT) has biased composition (polar residues). The span at 97 to 107 (HHIEREKDHSS) shows a compositional bias: basic and acidic residues. The span at 108 to 144 (SRPSSPRPQRASPNGSMSSAGNSSRNSSQSSSDGSCK) shows a compositional bias: low complexity. Positions 146-475 (SGEMVFVYEN…LDPDAQNPML (330 aa)) are interaction with AKT family members. Positions 167–241 (ERVTLIVDNT…YKTGIIRCPD (75 aa)) constitute a BTB domain. Residues 451 to 475 (ELDILPSHPASGNNDLDPDAQNPML) form a disordered region.

Interacts (via C-terminal 330-amino-acid region) with AKT1; AKT2 and AKT3. Interacts with PPP2CA and PPP1CA. As to expression, ubiquitously expressed (at protein level).

It is found in the nucleus. The protein localises to the cytoplasm. Plays a major role as an activator of AKT family members by inhibiting PPP2CA-mediated dephosphorylation, thereby keeping AKTs activated. Plays a role in preventing motor neuronal death and in accelerating the growth of pancreatic beta cells. The polypeptide is BTB/POZ domain-containing protein 10 (Btbd10) (Mus musculus (Mouse)).